A 252-amino-acid chain; its full sequence is LexA repressor (252 aa).

A disordered region spans residues 1-46 (MPEENRGGHQPYTEESSVSALHPVRTDDSVGSSAEQTGDAPTLTER). Positions 67–87 (IREIGEAVGLSSPSSVAHQLK) form a DNA-binding region, H-T-H motif. Active-site for autocatalytic cleavage activity residues include Ser-176 and Lys-213.

It belongs to the peptidase S24 family. Homodimer.

The catalysed reaction is Hydrolysis of Ala-|-Gly bond in repressor LexA.. Its function is as follows. Represses a number of genes involved in the response to DNA damage (SOS response), including recA and lexA. In the presence of single-stranded DNA, RecA interacts with LexA causing an autocatalytic cleavage which disrupts the DNA-binding part of LexA, leading to derepression of the SOS regulon and eventually DNA repair. In Thermobifida fusca (strain YX), this protein is LexA repressor.